A 109-amino-acid polypeptide reads, in one-letter code: Iron-sulfur cluster assembly protein CyaY (109 aa).

This sequence belongs to the frataxin family.

In terms of biological role, involved in iron-sulfur (Fe-S) cluster assembly. May act as a regulator of Fe-S biogenesis. This Shewanella sp. (strain ANA-3) protein is Iron-sulfur cluster assembly protein CyaY.